We begin with the raw amino-acid sequence, 38 residues long: Trypsin inhibitor 2 (38 aa).

Gln-1 carries the pyrrolidone carboxylic acid modification.

Post-translationally, contains disulfide bonds.

Inhibits trypsin-like proteases from the guts of the insect pests P.truncatus, P.americana, Acheta sp and Gryllus sp. In Opuntia streptacantha (Prickly pear cactus), this protein is Trypsin inhibitor 2.